Reading from the N-terminus, the 251-residue chain is Octanoyltransferase (251 aa).

Residues 49 to 230 (DEIPDQLLIL…ALDDALAGRL (182 aa)) form the BPL/LPL catalytic domain. Substrate-binding positions include 87-94 (RGGRITWH), 160-162 (AIG), and 173-175 (GVA). Cys191 acts as the Acyl-thioester intermediate in catalysis.

This sequence belongs to the LipB family.

It localises to the cytoplasm. It carries out the reaction octanoyl-[ACP] + L-lysyl-[protein] = N(6)-octanoyl-L-lysyl-[protein] + holo-[ACP] + H(+). It participates in protein modification; protein lipoylation via endogenous pathway; protein N(6)-(lipoyl)lysine from octanoyl-[acyl-carrier-protein]: step 1/2. In terms of biological role, catalyzes the transfer of endogenously produced octanoic acid from octanoyl-acyl-carrier-protein onto the lipoyl domains of lipoate-dependent enzymes. Lipoyl-ACP can also act as a substrate although octanoyl-ACP is likely to be the physiological substrate. This Corynebacterium glutamicum (strain R) protein is Octanoyltransferase.